A 149-amino-acid polypeptide reads, in one-letter code: Large ribosomal subunit protein uL13 (149 aa).

Belongs to the universal ribosomal protein uL13 family. Part of the 50S ribosomal subunit.

Its function is as follows. This protein is one of the early assembly proteins of the 50S ribosomal subunit, although it is not seen to bind rRNA by itself. It is important during the early stages of 50S assembly. The sequence is that of Large ribosomal subunit protein uL13 from Bifidobacterium adolescentis (strain ATCC 15703 / DSM 20083 / NCTC 11814 / E194a).